Reading from the N-terminus, the 365-residue chain is Chorismate synthase (365 aa).

Position 47 (Arg47) interacts with NADP(+). Residues 124–126, Gly287, 302–306, and Arg328 each bind FMN; these read RAS and KPTAT.

Belongs to the chorismate synthase family. As to quaternary structure, homotetramer. The cofactor is FMNH2.

The enzyme catalyses 5-O-(1-carboxyvinyl)-3-phosphoshikimate = chorismate + phosphate. Its pathway is metabolic intermediate biosynthesis; chorismate biosynthesis; chorismate from D-erythrose 4-phosphate and phosphoenolpyruvate: step 7/7. Its function is as follows. Catalyzes the anti-1,4-elimination of the C-3 phosphate and the C-6 proR hydrogen from 5-enolpyruvylshikimate-3-phosphate (EPSP) to yield chorismate, which is the branch point compound that serves as the starting substrate for the three terminal pathways of aromatic amino acid biosynthesis. This reaction introduces a second double bond into the aromatic ring system. The protein is Chorismate synthase of Prochlorococcus marinus (strain MIT 9312).